The chain runs to 106 residues: Urease subunit beta (106 aa).

The protein belongs to the urease beta subunit family. Heterotrimer of UreA (gamma), UreB (beta) and UreC (alpha) subunits. Three heterotrimers associate to form the active enzyme.

The protein localises to the cytoplasm. It catalyses the reaction urea + 2 H2O + H(+) = hydrogencarbonate + 2 NH4(+). Its pathway is nitrogen metabolism; urea degradation; CO(2) and NH(3) from urea (urease route): step 1/1. This is Urease subunit beta from Prochlorococcus marinus (strain MIT 9301).